The chain runs to 387 residues: Phosphoglycerate kinase (387 aa).

Substrate contacts are provided by residues 21–23 (DLN), R36, 59–62 (HLGR), R113, and R146. Residues K197, E314, and 340–343 (GGDT) contribute to the ATP site.

The protein belongs to the phosphoglycerate kinase family. In terms of assembly, monomer.

The protein resides in the cytoplasm. The enzyme catalyses (2R)-3-phosphoglycerate + ATP = (2R)-3-phospho-glyceroyl phosphate + ADP. Its pathway is carbohydrate degradation; glycolysis; pyruvate from D-glyceraldehyde 3-phosphate: step 2/5. The polypeptide is Phosphoglycerate kinase (Pseudomonas putida (strain W619)).